The following is a 198-amino-acid chain: Small ribosomal subunit protein uS4z (198 aa).

The residue at position 68 (Ser-68) is a Phosphoserine. One can recognise an S4 RNA-binding domain in the interval 109–180 (RRLQTIVFKS…PGRVKRRNEK (72 aa)). The disordered stretch occupies residues 163-198 (TSPFGGGRPGRVKRRNEKSASKKASGGGDADGDDEE).

The protein belongs to the universal ribosomal protein uS4 family. As to quaternary structure, binds to the translation initiation factors TIF3E1.

This chain is Small ribosomal subunit protein uS4z (RPS9B), found in Arabidopsis thaliana (Mouse-ear cress).